We begin with the raw amino-acid sequence, 216 residues long: Sperm microtubule inner protein 8 (216 aa).

In terms of assembly, microtubule inner protein component of sperm flagellar doublet microtubules. In terms of tissue distribution, expressed in testis.

It localises to the cytoplasm. It is found in the cytoskeleton. Its subcellular location is the flagellum axoneme. Functionally, microtubule inner protein (MIP) part of the dynein-decorated doublet microtubules (DMTs) in flagellum axoneme. May serve to reinforce and thus stabilize the microtubule structure in the sperm flagella. This Mus musculus (Mouse) protein is Sperm microtubule inner protein 8 (Spmip8).